The following is an 81-amino-acid chain: Photosystem I iron-sulfur center (81 aa).

4Fe-4S ferredoxin-type domains are found at residues 2 to 31 and 37 to 68; these read SHSV…MVPW and GQIA…VRVY. C11, C14, C17, C21, C48, C51, C54, and C58 together coordinate [4Fe-4S] cluster.

As to quaternary structure, the cyanobacterial PSI reaction center is composed of one copy each of PsaA,B,C,D,E,F,I,J,K,L,M and X, and forms trimeric complexes. [4Fe-4S] cluster serves as cofactor.

It is found in the cellular thylakoid membrane. The catalysed reaction is reduced [plastocyanin] + hnu + oxidized [2Fe-2S]-[ferredoxin] = oxidized [plastocyanin] + reduced [2Fe-2S]-[ferredoxin]. Apoprotein for the two 4Fe-4S centers FA and FB of photosystem I (PSI); essential for photochemical activity. FB is the terminal electron acceptor of PSI, donating electrons to ferredoxin. The C-terminus interacts with PsaA/B/D and helps assemble the protein into the PSI complex. Required for binding of PsaD and PsaE to PSI. PSI is a plastocyanin/cytochrome c6-ferredoxin oxidoreductase, converting photonic excitation into a charge separation, which transfers an electron from the donor P700 chlorophyll pair to the spectroscopically characterized acceptors A0, A1, FX, FA and FB in turn. This Prochlorococcus marinus (strain SARG / CCMP1375 / SS120) protein is Photosystem I iron-sulfur center.